The primary structure comprises 311 residues: MLQQTVLLSLFLLLRAHQGQDCADSSEEVLGVSGKPVRLRPSNIQAKHVSIEWKKKTGHQQTPQIVTWDTTDNKNFNMCCSDIYGFESENFALSIKSAKLNDSGHYLLEITNQRGIVCTKNFQMLIFDPVETPHLTVQGTLWANGTCQLSLSCFVPKDDNVSYALYRGSMLISNQRYGTHWENRTDASSLHTYTCNVSNKASWANHTLTSPQSCQSVPSKFNYLPFMVSIGILVKFFHGAIDCFCVWNRKRKQSQSIAKESLTIHEYVKNAQVSRDQRGHFRASGSSSDVRGDERGQRESDRRLFQFINRS.

The N-terminal stretch at Met-1–Gly-19 is a signal peptide. Topologically, residues Gln-20–Tyr-223 are extracellular. A disulfide bond links Cys-22 and Cys-118. Ig-like domains lie at Cys-22–Asp-128 and Glu-131–Gln-215. Residues Asn-101, Asn-144, Asn-160, Asn-183, Asn-196, and Asn-205 are each glycosylated (N-linked (GlcNAc...) asparagine). Cys-153 and Cys-195 are disulfide-bonded. Residues Leu-224–Trp-247 form a helical membrane-spanning segment. The Cytoplasmic segment spans residues Asn-248–Ser-311. A disordered region spans residues Arg-275–Asp-301. Positions Val-290 to Asp-301 are enriched in basic and acidic residues.

Interacts with CD48. Interacts (via phosphorylated ITSM 1-4) with SH2D1A (via SH2 domain); SH2D1A probably mediates association with FYN. Interacts (via phosphorylated ITSM 3) with PTPN11/SHP-2, INPP5D/SHIP1, PTPN6/SHP-1 and CSK; binding of SH2D1A/SAP prevents association with PTPN11, PTPN6 and CSK; conflictingly a similar association has been described for phosphorylated ITSM 1 also including GRB2 and PLCG1. Interacts weakly (via phosphorylated ITSM 2) with PTPN11/SHP-2 and CSK. Interacts with SH2D1B. Interacts with PIK3R1; PI3K recruits SH2D1A. Interacts with MHC class I proteins; the interaction is proposed to prevent self-killing of NK cells. Post-translationally, N-linked glycosylation is essential for the binding to its ligand CD48. Also O-glycosylated, in contrast, O-linked sialylation has a negative impact on ligand binding. Phosphorylated by FYN and CSK on tyrosine residues following activation. Coligation with inhibitory receptors such as KIR2DL1 inhibits phosphorylation upon contact of NK cells with sensitive target cells.

Its subcellular location is the membrane. It localises to the cell membrane. The protein localises to the membrane raft. Heterophilic receptor of the signaling lymphocytic activation molecule (SLAM) family; its ligand is CD48. SLAM receptors triggered by homo- or heterotypic cell-cell interactions are modulating the activation and differentiation of a wide variety of immune cells and thus are involved in the regulation and interconnection of both innate and adaptive immune response. Activities are controlled by presence or absence of small cytoplasmic adapter proteins, SH2D1A/SAP and/or SH2D1B/EAT-2. Acts as activating natural killer (NK) cell receptor. Activating function implicates association with SH2D1A and FYN. Downstreaming signaling involves predominantly VAV1, and, to a lesser degree, INPP5D/SHIP1 and CBL. Signal attenuation in the absence of SH2D1A is proposed to be dependent on INPP5D and to a lesser extent PTPN6/SHP-1 and PTPN11/SHP-2. Stimulates NK cell cytotoxicity, production of IFN-gamma and granule exocytosis. Optimal expansion and activation of NK cells seems to be dependent on the engagement of CD244 with CD48 expressed on neighboring NK cells. Acts as costimulator in NK activation by enhancing signals by other NK receptors such as NCR3 and NCR1. At early stages of NK cell differentiation may function as an inhibitory receptor possibly ensuring the self-tolerance of developing NK cells. Involved in the regulation of CD8(+) T-cell proliferation; expression on activated T-cells and binding to CD48 provides costimulatory-like function for neighboring T-cells. Inhibits inflammatory responses in dendritic cells (DCs). The sequence is that of Natural killer cell receptor 2B4 (Cd244) from Rattus norvegicus (Rat).